The chain runs to 273 residues: Cell division cycle-associated protein 3 (273 aa).

2 disordered regions span residues 1-231 (MGST…ALSE) and 251-273 (GGGAWEQNEDHDKENQHFALMES). Residues serine 29 and serine 31 each carry the phosphoserine modification. Over residues 32-45 (AGIQRTPIQVESSP) the composition is skewed to polar residues. At threonine 37 the chain carries Phosphothreonine. Serine 44 and serine 67 each carry phosphoserine. A Phosphothreonine modification is found at threonine 75. The F-box-like stretch occupies residues 90 to 124 (KELSEVFETEVSETEVSESISSPVLGLPQETPLSS). Serine 93 carries the phosphoserine modification. A compositionally biased stretch (acidic residues) spans 94-105 (EVFETEVSETEV). 2 stretches are compositionally biased toward polar residues: residues 144–154 (PWSQTELNSKQ) and 164–175 (STETMVSGQTSD). Phosphoserine is present on serine 204. Residue threonine 207 is modified to Phosphothreonine. Polar residues predominate over residues 210–220 (QDDNSPGTLTL). Phosphoserine is present on serine 214. Threonine 217 is modified (phosphothreonine). Positions 263–265 (KEN) match the KEN box motif.

Interacts with SKP1. Part of a SCF (SKP1-cullin-F-box) protein ligase complex. Ubiquitinated and degraded by the APC/C-Cdh1 complex.

It is found in the cytoplasm. Its subcellular location is the cytosol. The protein operates within protein modification; protein ubiquitination. Functionally, F-box-like protein which is required for entry into mitosis. Acts by participating in E3 ligase complexes that mediate the ubiquitination and degradation of WEE1 kinase at G2/M phase. The chain is Cell division cycle-associated protein 3 (Cdca3) from Rattus norvegicus (Rat).